Reading from the N-terminus, the 546-residue chain is Choline oxidase (546 aa).

FAD contacts are provided by residues 23 to 24, E44, W71, 90 to 92, 96 to 103, A232, and Y465; these read SA, AKV, and CSSHNSCI. H99 is subject to Tele-8alpha-FAD histidine. H466 functions as the Proton acceptor in the catalytic mechanism. FAD contacts are provided by residues A500 and 510–512; that span reads NPN.

This sequence belongs to the GMC oxidoreductase family. Homodimer. Requires FAD as cofactor.

It catalyses the reaction choline + 2 O2 + H2O = glycine betaine + 2 H2O2 + H(+). It participates in amine and polyamine biosynthesis; betaine biosynthesis via choline pathway; betaine from choline: step 1/1. Catalyzes the two-step oxidative conversion of choline to glycine-betaine with betaine aldehyde as an intermediate. Glycine-betaine accumulates to high levels in the cytoplasm of cells to prevent dehydration and plasmolysis in adverse hyperosmotic environments. Accepts either choline or the reaction intermediate betaine-aldehyde as substrate. In Arthrobacter globiformis, this protein is Choline oxidase (codA).